Reading from the N-terminus, the 148-residue chain is Large ribosomal subunit protein bL9 (148 aa).

The protein belongs to the bacterial ribosomal protein bL9 family.

Its function is as follows. Binds to the 23S rRNA. The polypeptide is Large ribosomal subunit protein bL9 (Geobacter metallireducens (strain ATCC 53774 / DSM 7210 / GS-15)).